The primary structure comprises 378 residues: Stimulator of interferon genes protein (378 aa).

2 consecutive transmembrane segments (helical) span residues 21 to 41 (AAFV…EPAD) and 46 to 66 (WLVL…LCSL). Residues Cys88 and Cys91 are each lipidated (S-palmitoyl cysteine). 2 helical membrane-spanning segments follow: residues 89 to 109 (LGCP…YTFL) and 114 to 134 (GLPF…NILL). A cyclic dinucleotide-binding domain (CBD) region spans residues 153 to 339 (FNVAHGLAWS…KHLKQEEKEE (187 aa)). 2',3'-cGAMP contacts are provided by Ser162, Tyr167, Arg238, and Thr263. 3',3'-c-di-GMP is bound by residues Ser162, Tyr167, 238–241 (RVYT), and Thr263. The 2',3'-cUAMP site is built by Tyr167, Arg238, and Thr263. A C-terminal tail (CTT) region spans residues 339–378 (EVTVGTMGSSGVLESSTLDKEPQLLISGMDQPLPLRTDVF). The residue at position 354 (Ser354) is a Phosphoserine. A Phosphothreonine modification is found at Thr355. Positions 362–365 (LLIS) match the pLxIS motif motif. At Ser365 the chain carries Phosphoserine; by TBK1.

This sequence belongs to the STING family. In terms of assembly, homodimer; forms a homodimer in absence of cyclic nucleotide (c-di-GMP or cGAMP). Homotetramer; in presence of cyclic nucleotide (c-di-GMP or cGAMP), forms tetramers and higher-order oligomers through side-by-side packing. Interacts (when phosphorylated) with IRF3; following activation and phosphorylation on the pLxIS motif by TBK1, recruits IRF3. Interacts with TBK1; when homodimer, leading to subsequent production of IFN-beta. Phosphorylation by TBK1 leads to activation and production of IFN-beta. Following cyclic nucleotide (c-di-GMP or cGAMP)-binding, activation and translocation from the endoplasmic reticulum, STING1 is phosphorylated by TBK1 at Ser-365 in the pLxIS motif. The phosphorylated pLxIS motif constitutes an IRF3-binding motif, leading to recruitment of the transcription factor IRF3 to induce type-I interferons and other cytokines. In contrast, lacks phosphorylation site at position 357, leading to reduced production of type-I interferons and other cytokines.

The protein resides in the endoplasmic reticulum membrane. The protein localises to the cytoplasm. It localises to the perinuclear region. Its subcellular location is the endoplasmic reticulum-Golgi intermediate compartment membrane. It is found in the golgi apparatus membrane. The protein resides in the cytoplasmic vesicle. The protein localises to the autophagosome membrane. It localises to the mitochondrion outer membrane. Its subcellular location is the cell membrane. The enzyme catalyses H(+)(in) = H(+)(out). In terms of biological role, facilitator of innate immune signaling that acts as a sensor of cytosolic DNA from bacteria and viruses and promotes low production of type I interferon (IFN-alpha and IFN-beta). Compared to other mammals, STING1-dependent type I interferon induction is strongly reduced in bats, suggesting that the cGAS-STING pathway promotes a limited inflammatory response. Innate immune response is triggered in response to non-CpG double-stranded DNA from viruses and bacteria delivered to the cytoplasm. Acts by binding cyclic dinucleotides: recognizes and binds cyclic di-GMP (c-di-GMP), a second messenger produced by bacteria, cyclic UMP-AMP (2',3'-cUAMP), and cyclic GMP-AMP (cGAMP), a messenger produced by CGAS in response to DNA virus in the cytosol. Upon binding to c-di-GMP, cUAMP or cGAMP, STING1 oligomerizes, translocates from the endoplasmic reticulum and is phosphorylated by TBK1 on the pLxIS motif, leading to recruitment and subsequent activation of the transcription factor IRF3 to induce expression of type I interferon and exert a potent anti-viral state. In addition to promote the production of type I interferons, plays a direct role in autophagy. Following cGAMP-binding, STING1 buds from the endoplasmic reticulum into COPII vesicles, which then form the endoplasmic reticulum-Golgi intermediate compartment (ERGIC). The ERGIC serves as the membrane source for WIPI2 recruitment and LC3 lipidation, leading to formation of autophagosomes that target cytosolic DNA or DNA viruses for degradation by the lysosome. Promotes autophagy by acting as a proton channel that directs proton efflux from the Golgi to facilitate MAP1LC3B/LC3B lipidation. The autophagy- and interferon-inducing activities can be uncoupled and autophagy induction is independent of TBK1 phosphorylation. The chain is Stimulator of interferon genes protein from Rhinolophus ferrumequinum (Greater horseshoe bat).